Here is a 408-residue protein sequence, read N- to C-terminus: Multidrug resistance protein MdtG (408 aa).

The next 11 helical transmembrane spans lie at 16–36 (LIVA…VMPF), 58–78 (IVFS…GGLA), 92–112 (LGMG…QFLI), 115–135 (ALLG…ATQV), 146–166 (TLST…GLLA), 173–193 (PVFF…LFCI), 224–244 (LFVT…ILTL), 256–276 (VAFI…LSAP), 290–310 (ILIT…YVQT), 319–339 (FLLG…LVYN), and 378–398 (AVFL…WNSL).

Belongs to the major facilitator superfamily. DHA1 family. MdtG (TC 2.A.1.2.20) subfamily.

The protein localises to the cell inner membrane. Its function is as follows. Confers resistance to fosfomycin and deoxycholate. In Escherichia coli O7:K1 (strain IAI39 / ExPEC), this protein is Multidrug resistance protein MdtG.